The sequence spans 385 residues: Acetylornithine aminotransferase (385 aa).

Residues 94–95 (GT) and phenylalanine 126 each bind pyridoxal 5'-phosphate. Arginine 129 provides a ligand contact to N(2)-acetyl-L-ornithine. 211–214 (DEVQ) lines the pyridoxal 5'-phosphate pocket. Lysine 240 carries the post-translational modification N6-(pyridoxal phosphate)lysine. Threonine 267 contacts N(2)-acetyl-L-ornithine. Threonine 268 is a binding site for pyridoxal 5'-phosphate.

It belongs to the class-III pyridoxal-phosphate-dependent aminotransferase family. ArgD subfamily. In terms of assembly, homodimer. The cofactor is pyridoxal 5'-phosphate.

The protein localises to the cytoplasm. It catalyses the reaction N(2)-acetyl-L-ornithine + 2-oxoglutarate = N-acetyl-L-glutamate 5-semialdehyde + L-glutamate. Its pathway is amino-acid biosynthesis; L-arginine biosynthesis; N(2)-acetyl-L-ornithine from L-glutamate: step 4/4. The sequence is that of Acetylornithine aminotransferase from Thermotoga maritima (strain ATCC 43589 / DSM 3109 / JCM 10099 / NBRC 100826 / MSB8).